The sequence spans 456 residues: Palmitoyltransferase PFA4 (456 aa).

Over 1–9 (MAARNWSRV) the chain is Cytoplasmic. Residues 10–30 (WVGGTVILISFIAFSSQIFVI) form a helical membrane-spanning segment. The Lumenal segment spans residues 31–37 (WPWYGRE). Residues 38 to 58 (ISLDLLMLLVPLNLAAFMIFW) traverse the membrane as a helical segment. At 59-138 (NYRLCVITSP…GNCVGFYNQG (80 aa)) the chain is on the cytoplasmic side. The 51-residue stretch at 95 to 145 (RYCKNCAHYKPPRAHHCRQCKTCWLKLDHHCPWIGNCVGFYNQGHFIRFLL) folds into the DHHC domain. The active-site S-palmitoyl cysteine intermediate is the Cys125. The helical transmembrane segment at 139–159 (HFIRFLLWVDIGTTFHLIIMV) threads the bilayer. Residues 160 to 176 (RRVLYIAEYYHEPTLAD) are Lumenal-facing. The chain crosses the membrane as a helical span at residues 177–197 (VLFLVFNFATCVPVWLCVGMF). Topologically, residues 198–456 (SIYHVYLACG…DPEEESGYTH (259 aa)) are cytoplasmic. The interval 284-377 (PPQDPSRLPN…YDHYDEGPMY (94 aa)) is disordered. Residues 285-298 (PQDPSRLPNPPPIP) show a composition bias toward pro residues. The segment covering 309 to 321 (NGFNPNLRPTNSL) has biased composition (polar residues). Over residues 337–352 (SHEQGRHYSSGDERDN) the composition is skewed to basic and acidic residues.

It belongs to the DHHC palmitoyltransferase family. PFA4 subfamily.

Its subcellular location is the endoplasmic reticulum membrane. It catalyses the reaction L-cysteinyl-[protein] + hexadecanoyl-CoA = S-hexadecanoyl-L-cysteinyl-[protein] + CoA. Its function is as follows. Mediates the reversible addition of palmitate to target proteins, thereby regulating their membrane association and biological function. Responsible for the modification of a subset of proteins that are critical in cryptococcal pathogenesis, with substrates involved in cell wall synthesis, signal transduction, and membrane trafficking. Palmitoylates chitin synthase CHS3. This Cryptococcus neoformans var. grubii serotype A (strain H99 / ATCC 208821 / CBS 10515 / FGSC 9487) (Filobasidiella neoformans var. grubii) protein is Palmitoyltransferase PFA4.